The following is a 292-amino-acid chain: Ribosomal protein L11 methyltransferase (292 aa).

S-adenosyl-L-methionine is bound by residues threonine 143, glycine 164, aspartate 186, and asparagine 228.

This sequence belongs to the methyltransferase superfamily. PrmA family.

It localises to the cytoplasm. It catalyses the reaction L-lysyl-[protein] + 3 S-adenosyl-L-methionine = N(6),N(6),N(6)-trimethyl-L-lysyl-[protein] + 3 S-adenosyl-L-homocysteine + 3 H(+). Functionally, methylates ribosomal protein L11. The polypeptide is Ribosomal protein L11 methyltransferase (Aeromonas salmonicida (strain A449)).